The sequence spans 235 residues: Serine protease SplA (235 aa).

The N-terminal stretch at 1–35 is a signal peptide; that stretch reads MNKNVMVKGLTALTILTSLGFAENISNQPHSIAKA. Active-site charge relay system residues include histidine 74, aspartate 113, and serine 189.

Belongs to the peptidase S1B family.

It is found in the secreted. The polypeptide is Serine protease SplA (splA) (Staphylococcus aureus (strain USA300)).